Consider the following 518-residue polypeptide: Crotonobetaine/carnitine--CoA ligase (518 aa).

It belongs to the ATP-dependent AMP-binding enzyme family.

The catalysed reaction is 4-(trimethylamino)butanoate + ATP + CoA = 4-(trimethylamino)butanoyl-CoA + AMP + diphosphate. The enzyme catalyses crotonobetaine + ATP + CoA = crotonobetainyl-CoA + AMP + diphosphate. It catalyses the reaction (R)-carnitine + ATP + CoA = (R)-carnitinyl-CoA + AMP + diphosphate. It participates in amine and polyamine metabolism; carnitine metabolism. Catalyzes the transfer of CoA to carnitine, generating the initial carnitinyl-CoA needed for the CaiB reaction cycle. Also has activity toward crotonobetaine and gamma-butyrobetaine. The chain is Crotonobetaine/carnitine--CoA ligase from Proteus sp. (strain LE138).